The primary structure comprises 178 residues: Large ribosomal subunit protein uL6 (178 aa).

The protein belongs to the universal ribosomal protein uL6 family. In terms of assembly, part of the 50S ribosomal subunit.

Its function is as follows. This protein binds to the 23S rRNA, and is important in its secondary structure. It is located near the subunit interface in the base of the L7/L12 stalk, and near the tRNA binding site of the peptidyltransferase center. The chain is Large ribosomal subunit protein uL6 from Staphylococcus carnosus (strain TM300).